The following is a 155-amino-acid chain: Cytochrome c-type biogenesis protein CcmE (155 aa).

At 1-8 (MNPLRKKR) the chain is on the cytoplasmic side. Residues 9–29 (LLIIAALLAGVGLAMTLALGA) traverse the membrane as a helical; Signal-anchor for type II membrane protein segment. The Periplasmic segment spans residues 30 to 155 (LKENINLFYT…GGSSTPAKQG (126 aa)). Histidine 124 and tyrosine 128 together coordinate heme. The segment at 134 to 155 (TKALRDSGQAAPGGSSTPAKQG) is disordered.

This sequence belongs to the CcmE/CycJ family.

It localises to the cell inner membrane. Heme chaperone required for the biogenesis of c-type cytochromes. Transiently binds heme delivered by CcmC and transfers the heme to apo-cytochromes in a process facilitated by CcmF and CcmH. In Pseudomonas savastanoi pv. phaseolicola (strain 1448A / Race 6) (Pseudomonas syringae pv. phaseolicola (strain 1448A / Race 6)), this protein is Cytochrome c-type biogenesis protein CcmE.